The chain runs to 505 residues: MKNEKKKSGIEPKVFFPPLIIVGILCWLTVRDLDAANVVINAVFSYVTNVWGWAFEWYMIVMLFGWFWLVFGPYAKKRLGDEKPEFSTASWIFMMFASCTSAAVLFWGSIEIYYYISTPPFGLEPNSTGAKEIGLAYSLFHWGPLPWATYSFLSVAFAYFFFVRKMDVIRPSSTLVPLVGEKHAKGLFGTIVDNFYLVALIFAMGTSLGLATPLVTECMQWLFGIPHTLQLDAIIITCWIILNAICVACGLQKGVRIASDVRSYLSFLMLGWVFIVSGASFIMNYFTDSVGMLLMHLPRMLFYTDAIGKGGFPQGWTVFYWAWWVIYAIQMSIFLARISRGRTVRELCFGMVMGLTASTWILWTVLGSNTLLLMDKNILNIPQLIEQHVVARAIIETWAALPLSTATMWGFFILCFIATVTLINACSYTLAMSTCREVRDGEEPPLLVRIGWSVLVGIIGIVLLALGGLKPIQTAIIAGGCPLFFVNIMVTLSFIKDAKVHWKDK.

Helical transmembrane passes span 10 to 30 (IEPKVFFPPLIIVGILCWLTV), 51 to 71 (WGWAFEWYMIVMLFGWFWLVF), 92 to 112 (IFMMFASCTSAAVLFWGSIEI), 143 to 163 (GPLPWATYSFLSVAFAYFFFV), 195 to 215 (FYLVALIFAMGTSLGLATPLV), 231 to 251 (LDAIIITCWIILNAICVACGL), 263 to 283 (SYLSFLMLGWVFIVSGASFIM), 316 to 336 (WTVFYWAWWVIYAIQMSIFLA), 347 to 367 (LCFGMVMGLTASTWILWTVLG), 403 to 423 (LSTATMWGFFILCFIATVTLI), 446 to 466 (LLVRIGWSVLVGIIGIVLLAL), and 475 to 495 (AIIAGGCPLFFVNIMVTLSFI).

The protein belongs to the BCCT transporter (TC 2.A.15) family. CaiT subfamily. In terms of assembly, homotrimer.

It is found in the cell inner membrane. It catalyses the reaction 4-(trimethylamino)butanoate(in) + (R)-carnitine(out) = 4-(trimethylamino)butanoate(out) + (R)-carnitine(in). Its pathway is amine and polyamine metabolism; carnitine metabolism. Its function is as follows. Catalyzes the exchange of L-carnitine for gamma-butyrobetaine. The sequence is that of L-carnitine/gamma-butyrobetaine antiporter from Salmonella gallinarum (strain 287/91 / NCTC 13346).